The primary structure comprises 323 residues: MSDLKMQRSGGEPLDTIKAYIALTKPRVIELLLVATIPTMLQAERGENNIVLILLTVFGGWMGAAAANTFNMVADSDIDQRMGRTRARPLVRHTVSNRDASIFAWVLTVASFLWLWLLCDSMLAGIFVLITIFFYIFVYTKWLKRRTHMNIVWGGAAGCMPVLVGWAVIVDQFEPGVPQQWWQAIVLFMVIFFWTPPHTWALAMKYREDYKAAGVPMLPVVRTPVQVTAQIVWYSVATVLTTFLLIPATGWIYAAIAVISGVTFLFMAIKLHLGIKNGGKVKPLKLFILSNNYLAVLFVALSVDAVLGLETIGEMLGWTTTFF.

Helical transmembrane passes span 50–70 (IVLILLTVFGGWMGAAAANTF), 97–117 (NRDASIFAWVLTVASFLWLWL), 118–138 (LCDSMLAGIFVLITIFFYIFV), 150–170 (NIVWGGAAGCMPVLVGWAVIV), 184–204 (AIVLFMVIFFWTPPHTWALAM), 231–248 (IVWYSVATVLTTFLLIPA), 252–274 (IYAAIAVISGVTFLFMAIKLHLG), and 293–313 (YLAVLFVALSVDAVLGLETIG).

The protein belongs to the UbiA prenyltransferase family. Protoheme IX farnesyltransferase subfamily.

It localises to the cell membrane. The enzyme catalyses heme b + (2E,6E)-farnesyl diphosphate + H2O = Fe(II)-heme o + diphosphate. Its pathway is porphyrin-containing compound metabolism; heme O biosynthesis; heme O from protoheme: step 1/1. Functionally, converts heme B (protoheme IX) to heme O by substitution of the vinyl group on carbon 2 of heme B porphyrin ring with a hydroxyethyl farnesyl side group. The chain is Protoheme IX farnesyltransferase from Corynebacterium glutamicum (strain R).